The primary structure comprises 82 residues: RNA-binding protein KhpA (82 aa).

The KH domain maps to 35–82 (STILELRVSQSDVGKIIGRRGRIARAIRTLLGACAAKTNRRVQLEILD).

The protein belongs to the KhpA RNA-binding protein family. As to quaternary structure, forms a complex with KhpB.

The protein localises to the cytoplasm. Functionally, a probable RNA chaperone. Forms a complex with KhpB which binds to cellular RNA and controls its expression. Plays a role in peptidoglycan (PG) homeostasis and cell length regulation. This is RNA-binding protein KhpA from Borreliella burgdorferi (strain ATCC 35210 / DSM 4680 / CIP 102532 / B31) (Borrelia burgdorferi).